The sequence spans 113 residues: Large ribosomal subunit protein uL24 (113 aa).

This sequence belongs to the universal ribosomal protein uL24 family. In terms of assembly, part of the 50S ribosomal subunit.

In terms of biological role, one of two assembly initiator proteins, it binds directly to the 5'-end of the 23S rRNA, where it nucleates assembly of the 50S subunit. Functionally, one of the proteins that surrounds the polypeptide exit tunnel on the outside of the subunit. The sequence is that of Large ribosomal subunit protein uL24 from Micrococcus luteus (Micrococcus lysodeikticus).